Consider the following 25-residue polypeptide: Fibrinolytic enzyme large subunit (25 aa).

A Peptidase S1 domain is found at 1–25 (VIGGTNASPGEIPWQLSQQRQSGSW). Residues 1–25 (VIGGTNASPGEIPWQLSQQRQSGSW) are disordered. Over residues 15-25 (QLSQQRQSGSW) the composition is skewed to polar residues.

Belongs to the peptidase S1 family. As to quaternary structure, heterodimer of a large and a small subunit held together by hydrophobic interactions.

Its function is as follows. Cleaves the carboxyl side of basic amino acids, small neutral amino acids, and Met residue. It is also a plasminogen activator. The sequence is that of Fibrinolytic enzyme large subunit from Eisenia fetida (Red wiggler worm).